The primary structure comprises 221 residues: Proline-rich protein 20A (221 aa).

2 disordered regions span residues 1–103 (MEEP…QRQG) and 137–174 (SLSETGPPPGTVQEGPGPDVAQPELGFQEPPAAPGPQA). The segment covering 42-53 (PAQPAQPAKPIA) has biased composition (low complexity). A compositionally biased stretch (pro residues) spans 63 to 72 (PARPESPPPA). The segment covering 75-93 (GRRRGGSRRPGRGRGRRAG) has biased composition (basic residues).

It belongs to the PRR20 family.

This is Proline-rich protein 20A (PRR20A) from Homo sapiens (Human).